A 200-amino-acid chain; its full sequence is Max dimerization protein 3 (200 aa).

Disordered stretches follow at residues 31–56 (SILP…DNVR) and 133–164 (RLLP…QEDL). The 53-residue stretch at 54–106 (NVRSVHNELEKHRRAQLRRCLEQLKQQVPLSMENSRHTTLSLLHRAKQHIKKL) folds into the bHLH domain.

As to quaternary structure, efficient DNA binding requires dimerization with another bHLH protein. Binds DNA as a heterodimer with MAX. As to expression, expressed broadly throughout the CNS and the eye, starting at neurula stages.

It localises to the nucleus. Functionally, transcriptional repressor. Binds with MAX to form a sequence-specific DNA-binding protein complex which recognizes the core sequence 5'-CAC[GA]TG-3'. The polypeptide is Max dimerization protein 3 (mxd3) (Xenopus laevis (African clawed frog)).